The sequence spans 262 residues: Acyl-coenzyme A diphosphatase FITM2 (262 aa).

At 1–23 the chain is on the cytoplasmic side; it reads MEHLERCAWFLRGTLVRATVRRH. A helical membrane pass occupies residues 24 to 44; sequence LPWALVAAMLAGSVVKELSPL. At 45 to 57 the chain is on the lumenal side; the sequence is PESYLSNKRNVLN. Residues 58 to 78 form a helical membrane-spanning segment; that stretch reads VYFVKLAWAWTVCLLLPFIAL. Residues 79-93 are Cytoplasmic-facing; the sequence is TNYHLTGKTSLVLRR. Residues 94-114 form a helical membrane-spanning segment; that stretch reads LSTLLVGTAIWYICTALFSNI. Residues 115 to 145 lie on the Lumenal side of the membrane; that stretch reads EHYTGSCYQSPALEGIRQEHRSKQQCHREGG. The chain crosses the membrane as a helical span at residues 146 to 166; it reads FWHGFDISGHSFLLTFCALMI. The active site involves H155. At 167-190 the chain is on the cytoplasmic side; sequence VEEMAVLHEVKTDRGHHLHAAITT. A helical membrane pass occupies residues 191 to 211; it reads LVVALGFLTFIWVWMFLCTAV. Topologically, residues 212–218 are lumenal; that stretch reads YFHDLTQ. H214 is a catalytic residue. A helical transmembrane segment spans residues 219 to 239; sequence KVFGTMFGLLGWYGTYGYWYL. At 240–262 the chain is on the cytoplasmic side; it reads KSFSPGLPPQSCSLTLKRDTYKK.

This sequence belongs to the FIT family. Widely expressed, with highest levels in white and brown adipose tissues (at protein level). In the heart, mRNA expression levels do not correlate well with protein levels, suggesting post-transcriptional regulation in this organ.

It is found in the endoplasmic reticulum membrane. The catalysed reaction is an acyl-CoA + H2O = an acyl-4'-phosphopantetheine + adenosine 3',5'-bisphosphate + 2 H(+). It carries out the reaction (9Z)-octadecenoyl-CoA + H2O = S-(9Z-octadecenoyl)-4'-phosphopantetheine + adenosine 3',5'-bisphosphate + 2 H(+). It catalyses the reaction (5Z,8Z,11Z,14Z)-eicosatetraenoyl-CoA + H2O = S-(5Z,8Z,11Z,14Z-eicosatetraenoyl)-4'-phosphopantetheine + adenosine 3',5'-bisphosphate + 2 H(+). The enzyme catalyses hexadecanoyl-CoA + H2O = S-hexadecanoyl-4'-phosphopantetheine + adenosine 3',5'-bisphosphate + 2 H(+). In terms of biological role, fatty acyl-coenzyme A (CoA) diphosphatase that hydrolyzes fatty acyl-CoA to yield acyl-4'-phosphopantetheine and adenosine 3',5'-bisphosphate. Preferentially hydrolyzes unsaturated long-chain acyl-CoA substrates such as oleoyl-CoA/(9Z)-octadecenoyl-CoA and arachidonoyl-CoA/(5Z,8Z,11Z,14Z)-eicosatetraenoyl-CoA in the endoplasmic reticulum (ER) lumen. This catalytic activity is required for maintaining ER structure and for lipid droplets (LDs) biogenesis, which are lipid storage organelles involved in maintaining lipid and energy homeostasis. Directly binds to diacylglycerol (DAGs) and triacylglycerol, which is also important for LD biogenesis. May support directional budding of nacent LDs from the ER into the cytosol by reducing DAG levels at sites of LD formation. Plays a role in the regulation of cell morphology and cytoskeletal organization. In Mus musculus (Mouse), this protein is Acyl-coenzyme A diphosphatase FITM2.